The primary structure comprises 388 residues: Leucine aminopeptidase 1 (388 aa).

An N-terminal signal peptide occupies residues 1-19; sequence MRVLAAIALGATGLRGALA. The propeptide occupies 20–88; that stretch reads AVVPQEVLGT…YPTLNSASYV (69 aa). N-linked (GlcNAc...) asparagine glycans are attached at residues asparagine 106 and asparagine 180. The Zn(2+) site is built by histidine 188 and aspartate 207. A glycan (N-linked (GlcNAc...) asparagine) is linked at asparagine 232. Positions 246 and 273 each coordinate Zn(2+). A disulfide bridge connects residues cysteine 322 and cysteine 326. Histidine 355 is a Zn(2+) binding site.

Belongs to the peptidase M28 family. M28E subfamily. Monomer. Requires Zn(2+) as cofactor.

It is found in the secreted. In terms of biological role, extracellular aminopeptidase that allows assimilation of proteinaceous substrates. The sequence is that of Leucine aminopeptidase 1 (lap1) from Aspergillus clavatus (strain ATCC 1007 / CBS 513.65 / DSM 816 / NCTC 3887 / NRRL 1 / QM 1276 / 107).